The chain runs to 438 residues: Actin-like protein 7A (438 aa).

Residues 36–56 (ASLKDGPAKRAVWVRRDHSEP) form a required for interaction with TES region.

The protein belongs to the actin family. In terms of assembly, interacts (via N-terminus) with TES (via LIM domain 2). Heterodimer with TES; the heterodimer interacts with ENAH to form a heterotrimer. Interacts with ACTL9. Interacts with CYLC1; the interaction may be relevant for proper acrosome attachment to the nuclear envelope.

The protein resides in the cytoplasm. It localises to the cytoskeleton. The protein localises to the golgi apparatus. Its subcellular location is the nucleus. Its function is as follows. Essential for normal spermatogenesis and male fertility. Required for normal sperm head morphology, acroplaxome formation, acrosome attachment, and acrosome granule stability. May anchor and stabilize acrosomal adherence to the acroplaxome at least in part by facilitating the presence of F-actin in the subacrosomal space. May play an important role in formation and fusion of Golgi-derived vesicles during acrosome biogenesis. In Bos taurus (Bovine), this protein is Actin-like protein 7A (ACTL7A).